Here is a 449-residue protein sequence, read N- to C-terminus: Bifunctional protein GlmU (449 aa).

The interval Met1–Arg225 is pyrophosphorylase. UDP-N-acetyl-alpha-D-glucosamine contacts are provided by residues Leu7–Gly10, Lys21, Gln73, and Gly78–Thr79. Asp103 provides a ligand contact to Mg(2+). Residues Gly140, Glu154, Asn169, and Asn223 each coordinate UDP-N-acetyl-alpha-D-glucosamine. Position 223 (Asn223) interacts with Mg(2+). The segment at Ile226–Asn246 is linker. The tract at residues Gly247–Pro449 is N-acetyltransferase. 2 residues coordinate UDP-N-acetyl-alpha-D-glucosamine: Arg328 and Lys346. His358 (proton acceptor) is an active-site residue. Residues Tyr361 and Asn372 each contribute to the UDP-N-acetyl-alpha-D-glucosamine site. Acetyl-CoA contacts are provided by Ala375, Ala418, and Arg435.

The protein in the N-terminal section; belongs to the N-acetylglucosamine-1-phosphate uridyltransferase family. This sequence in the C-terminal section; belongs to the transferase hexapeptide repeat family. Homotrimer. It depends on Mg(2+) as a cofactor.

Its subcellular location is the cytoplasm. It catalyses the reaction alpha-D-glucosamine 1-phosphate + acetyl-CoA = N-acetyl-alpha-D-glucosamine 1-phosphate + CoA + H(+). The catalysed reaction is N-acetyl-alpha-D-glucosamine 1-phosphate + UTP + H(+) = UDP-N-acetyl-alpha-D-glucosamine + diphosphate. It participates in nucleotide-sugar biosynthesis; UDP-N-acetyl-alpha-D-glucosamine biosynthesis; N-acetyl-alpha-D-glucosamine 1-phosphate from alpha-D-glucosamine 6-phosphate (route II): step 2/2. It functions in the pathway nucleotide-sugar biosynthesis; UDP-N-acetyl-alpha-D-glucosamine biosynthesis; UDP-N-acetyl-alpha-D-glucosamine from N-acetyl-alpha-D-glucosamine 1-phosphate: step 1/1. The protein operates within bacterial outer membrane biogenesis; LPS lipid A biosynthesis. Catalyzes the last two sequential reactions in the de novo biosynthetic pathway for UDP-N-acetylglucosamine (UDP-GlcNAc). The C-terminal domain catalyzes the transfer of acetyl group from acetyl coenzyme A to glucosamine-1-phosphate (GlcN-1-P) to produce N-acetylglucosamine-1-phosphate (GlcNAc-1-P), which is converted into UDP-GlcNAc by the transfer of uridine 5-monophosphate (from uridine 5-triphosphate), a reaction catalyzed by the N-terminal domain. The chain is Bifunctional protein GlmU from Prochlorococcus marinus (strain MIT 9312).